The sequence spans 479 residues: FAD-dependent monooxygenase sdcF (479 aa).

Residues 40–213 enclose the FAD-binding PCMH-type domain; it reads AQLPPSCFVL…TLFDMEAFST (174 aa). The residue at position 79 (histidine 79) is a Pros-8alpha-FAD histidine.

It belongs to the oxygen-dependent FAD-linked oxidoreductase family. It depends on FAD as a cofactor.

The protein operates within secondary metabolite biosynthesis. Functionally, FAD-dependent monooxygenase; part of the gene cluster that mediates the biosynthesis of the polyenes aspernidgulenes. The carbon backbone of aspernidgulenes is synthesized by the HR-PKS sdgA, which accepts acetyl-CoA as the starter unit and performs malonyl-CoA extensions as well as regioselective methylation and reduction. The resulting nonaketide offloads the HR-PKS by intramolecular lactonization to yield the 5,6-dihydro-alpha-pyrone-containing hexaenoic acids preaspernidgulene A1 and A2. The FAD-dependent monooxygenase sdgC then installs the first epoxide on the penultimate double bond. Subsequently, the FAD-dependent monooxygenase sdgF presumably generates a ketone intermediate through Meinwald rearrangement involving a hydride shift. Next, sdgC introduces another epoxide on the last olefin of the ketone intermediate after E/Z isomerization. The epoxide hydrolase sdgD then catalyzes stereospecific cyclization of the 5,6-dihydro-alpha-pyrone and opening of the epoxide ring to form an oxygenated trimethylcyclopentanone and an oxabicyclo[2.2.1]heptane unit. Finally, the bicyclic unit undergoes hydrolytic cleavage, either spontaneously or catalyzed by sdgD, to assemble the dimethyl-gamma-lactone moiety in aspernidgulene A1. This is FAD-dependent monooxygenase sdcF from Emericella nidulans (strain FGSC A4 / ATCC 38163 / CBS 112.46 / NRRL 194 / M139) (Aspergillus nidulans).